The following is a 38-amino-acid chain: Kappa-theraphotoxin-Hm2a (38 aa).

Intrachain disulfides connect Cys-2–Cys-16, Cys-9–Cys-21, and Cys-15–Cys-32. The residue at position 38 (Phe-38) is a Phenylalanine amide.

The protein belongs to the neurotoxin 10 (Hwtx-1) family. 13 (Hntx-13) subfamily. In terms of tissue distribution, expressed by the venom gland.

It localises to the secreted. Inhibitor of voltage-gated potassium channels. It specifically inhibits Kv2.1/KCNB1 channels. This chain is Kappa-theraphotoxin-Hm2a, found in Heteroscodra maculata (Togo starburst tarantula).